The chain runs to 64 residues: Protein DsrB (64 aa).

It belongs to the DsrB family.

The sequence is that of Protein DsrB from Salmonella arizonae (strain ATCC BAA-731 / CDC346-86 / RSK2980).